The chain runs to 197 residues: dITP/XTP pyrophosphatase (197 aa).

8–13 is a binding site for substrate; the sequence is TGNVGK. 2 residues coordinate Mg(2+): Glu-40 and Asp-69. Asp-69 serves as the catalytic Proton acceptor. Substrate-binding positions include Ser-70, 154-157, Lys-177, and 182-183; these read FGYD and HR.

Belongs to the HAM1 NTPase family. As to quaternary structure, homodimer. The cofactor is Mg(2+). Mn(2+) serves as cofactor. Requires Ni(2+) as cofactor.

It carries out the reaction XTP + H2O = XMP + diphosphate + H(+). It catalyses the reaction dITP + H2O = dIMP + diphosphate + H(+). The enzyme catalyses ITP + H2O = IMP + diphosphate + H(+). In terms of biological role, pyrophosphatase that catalyzes the hydrolysis of nucleoside triphosphates to their monophosphate derivatives, with a high preference for the non-canonical purine nucleotides XTP (xanthosine triphosphate), dITP (deoxyinosine triphosphate) and ITP. Can also efficiently hydrolyze 2'-deoxy-N-6-hydroxylaminopurine triphosphate (dHAPTP). Seems to function as a house-cleaning enzyme that removes non-canonical purine nucleotides from the nucleotide pool, thus preventing their incorporation into DNA/RNA and avoiding chromosomal lesions. To a much lesser extent, is also able to hydrolyze GTP, dGTP and dUTP, but shows very low activity toward the canonical nucleotides dATP, dCTP and dTTP and toward 8-oxo-dGTP, purine deoxyribose triphosphate, 2-aminopurine deoxyribose triphosphate and 2,6-diaminopurine deoxyribose triphosphate. Its function is as follows. Genetic interactions among priB, dam, lexA, nagC, polA, rdgB, rdgB, rep and uup link the PriA-PriB replication restart pathway to DNA double-strand break repair. This Escherichia coli (strain K12) protein is dITP/XTP pyrophosphatase.